We begin with the raw amino-acid sequence, 292 residues long: Protease HtpX (292 aa).

The next 2 helical transmembrane spans lie at 5 to 25 (IFLFLLTNLAVLMLAGIVMSL) and 34 to 54 (SGLLVMAAIFGFGGSFISLLL). His-140 is a Zn(2+) binding site. Residue Glu-141 is part of the active site. Zn(2+) is bound at residue His-144. 2 consecutive transmembrane segments (helical) span residues 155 to 175 (LLQGVLNTFVIVLARVVGGII) and 193 to 213 (IIVFALEMVFGLFATMIAMWF). Zn(2+) is bound at residue Glu-218.

This sequence belongs to the peptidase M48B family. Zn(2+) serves as cofactor.

The protein resides in the cell inner membrane. The protein is Protease HtpX of Xanthomonas euvesicatoria pv. vesicatoria (strain 85-10) (Xanthomonas campestris pv. vesicatoria).